Reading from the N-terminus, the 676-residue chain is UvrABC system protein B (676 aa).

One can recognise a Helicase ATP-binding domain in the interval 26–414 (EGLDAGLAHQ…SAGEIADQVV (389 aa)). 39–46 (GVTGSGKT) is an ATP binding site. Residues 92–115 (YYDYYQPEAYVPTTDTFIEKDASV) carry the Beta-hairpin motif. In terms of domain architecture, Helicase C-terminal spans 432-598 (QVDDLLSEIR…ALKRNIKDIM (167 aa)). Residues 636–671 (EKEISRLEAAMYQHAQDLEFELAAEKRDEIEKLRAQ) form the UVR domain.

It belongs to the UvrB family. In terms of assembly, forms a heterotetramer with UvrA during the search for lesions. Interacts with UvrC in an incision complex.

It localises to the cytoplasm. Its function is as follows. The UvrABC repair system catalyzes the recognition and processing of DNA lesions. A damage recognition complex composed of 2 UvrA and 2 UvrB subunits scans DNA for abnormalities. Upon binding of the UvrA(2)B(2) complex to a putative damaged site, the DNA wraps around one UvrB monomer. DNA wrap is dependent on ATP binding by UvrB and probably causes local melting of the DNA helix, facilitating insertion of UvrB beta-hairpin between the DNA strands. Then UvrB probes one DNA strand for the presence of a lesion. If a lesion is found the UvrA subunits dissociate and the UvrB-DNA preincision complex is formed. This complex is subsequently bound by UvrC and the second UvrB is released. If no lesion is found, the DNA wraps around the other UvrB subunit that will check the other stand for damage. This Vibrio parahaemolyticus serotype O3:K6 (strain RIMD 2210633) protein is UvrABC system protein B.